The primary structure comprises 279 residues: Presqualene diphosphate synthase (279 aa).

The protein belongs to the phytoene/squalene synthase family. HpnD subfamily.

The enzyme catalyses 2 (2E,6E)-farnesyl diphosphate = presqualene diphosphate + diphosphate. The protein operates within secondary metabolite biosynthesis; hopanoid biosynthesis. Involved in the biosynthesis of the hopanoid precursor squalene (SQ) from farnesyl diphosphate (FPP). Catalyzes the first step, the formation of presqualene diphosphate (PSPP) from two molecules of FPP. The sequence is that of Presqualene diphosphate synthase from Rhodopseudomonas palustris (strain ATCC BAA-98 / CGA009).